The primary structure comprises 156 residues: Small ribosomal subunit protein uS7 (156 aa).

The protein belongs to the universal ribosomal protein uS7 family. As to quaternary structure, part of the 30S ribosomal subunit. Contacts proteins S9 and S11.

Functionally, one of the primary rRNA binding proteins, it binds directly to 16S rRNA where it nucleates assembly of the head domain of the 30S subunit. Is located at the subunit interface close to the decoding center, probably blocks exit of the E-site tRNA. The polypeptide is Small ribosomal subunit protein uS7 (Methylorubrum populi (strain ATCC BAA-705 / NCIMB 13946 / BJ001) (Methylobacterium populi)).